A 342-amino-acid chain; its full sequence is Dihydroorotase (342 aa).

Zn(2+) is bound by residues H13 and H15. Residues H15 to R17 and N41 contribute to the substrate site. Zn(2+)-binding residues include K98, H135, and H173. K98 is modified (N6-carboxylysine). Substrate is bound at residue H135. Residue L218 participates in substrate binding. Position 246 (D246) interacts with Zn(2+). D246 is an active-site residue. Substrate contacts are provided by H250 and A262.

Belongs to the metallo-dependent hydrolases superfamily. DHOase family. Class II DHOase subfamily. Homodimer. Zn(2+) serves as cofactor.

It catalyses the reaction (S)-dihydroorotate + H2O = N-carbamoyl-L-aspartate + H(+). The protein operates within pyrimidine metabolism; UMP biosynthesis via de novo pathway; (S)-dihydroorotate from bicarbonate: step 3/3. Functionally, catalyzes the reversible cyclization of carbamoyl aspartate to dihydroorotate. The sequence is that of Dihydroorotase from Vibrio vulnificus (strain YJ016).